The chain runs to 162 residues: 18.5 kDa class IV heat shock protein (162 aa).

In terms of domain architecture, sHSP spans 53 to 149; the sequence is TSSSTVNTQL…PPQLPEIEEN (97 aa).

The protein belongs to the small heat shock protein (HSP20) family. May form oligomeric structures.

It localises to the cytoplasm. The chain is 18.5 kDa class IV heat shock protein (HSP18.5) from Arabidopsis thaliana (Mouse-ear cress).